We begin with the raw amino-acid sequence, 171 residues long: Apoptosis regulator Bcl-2 homolog (171 aa).

Interacts with host BECN1; this interaction inhibits host autophagy. Interacts with host BAK1 and BAX.

The protein resides in the host cytoplasm. Plays a role in the protection against apoptosis mediated by cytotoxic cells during the immune response to acute and persistent viral infection. Contributes therefore to latency establishment. Plays also a role in the inhibition of host starvation-induced autophagy which ultimately contributes to the viral chronic infection. This Murid herpesvirus 4 (MuHV-4) protein is Apoptosis regulator Bcl-2 homolog (vBCL2).